The following is a 429-amino-acid chain: Small ribosomal subunit protein bS1 (429 aa).

S1 motif domains are found at residues 55–128 (GDVV…LSKK), 144–211 (GDTV…SRKA), 231–299 (GEVV…LSIK), and 316–385 (GSVL…LSMK). Residues 382-399 (LSMKALEEKPEREDRRGN) are compositionally biased toward basic and acidic residues. Positions 382 to 412 (LSMKALEEKPEREDRRGNDGSASRADIAAYK) are disordered.

Belongs to the bacterial ribosomal protein bS1 family.

Functionally, binds mRNA; thus facilitating recognition of the initiation point. It is needed to translate mRNA with a short Shine-Dalgarno (SD) purine-rich sequence. In Leuconostoc lactis, this protein is Small ribosomal subunit protein bS1 (rps1).